Reading from the N-terminus, the 589-residue chain is Aspartate--tRNA(Asp/Asn) ligase (589 aa).

Residue glutamate 170 coordinates L-aspartate. An aspartate region spans residues 194-197 (QLFK). Residue arginine 216 coordinates L-aspartate. ATP contacts are provided by residues 216–218 (RDE) and glutamine 225. Histidine 448 provides a ligand contact to L-aspartate. ATP is bound at residue glutamate 482. Residue arginine 489 coordinates L-aspartate. 534–537 (GWDR) provides a ligand contact to ATP. The interval 563-589 (PLTDAPASITAQQRKESGIDTKPKEVE) is disordered. The segment covering 575–589 (QRKESGIDTKPKEVE) has biased composition (basic and acidic residues).

Belongs to the class-II aminoacyl-tRNA synthetase family. Type 1 subfamily. Homodimer.

It localises to the cytoplasm. It catalyses the reaction tRNA(Asx) + L-aspartate + ATP = L-aspartyl-tRNA(Asx) + AMP + diphosphate. Functionally, aspartyl-tRNA synthetase with relaxed tRNA specificity since it is able to aspartylate not only its cognate tRNA(Asp) but also tRNA(Asn). Reaction proceeds in two steps: L-aspartate is first activated by ATP to form Asp-AMP and then transferred to the acceptor end of tRNA(Asp/Asn). The sequence is that of Aspartate--tRNA(Asp/Asn) ligase from Mycobacterium leprae (strain Br4923).